The chain runs to 215 residues: LysM and putative peptidoglycan-binding domain-containing protein 1 (215 aa).

The 45-residue stretch at 37–81 folds into the LysM domain; sequence LEHQVQPGDTLQGLALRYGVSMEQIKRANRLYTNDSIFLKKSLYI. Polar residues-rich tracts occupy residues 86–103 and 173–189; these read GQSD…SETE and GNRT…QQRS. Disordered stretches follow at residues 86 to 133 and 148 to 203; these read GQSD…PVDF and AVKK…TRAS.

This chain is LysM and putative peptidoglycan-binding domain-containing protein 1 (lysmd1), found in Xenopus laevis (African clawed frog).